The primary structure comprises 427 residues: Dihydroorotase (427 aa).

Zn(2+)-binding residues include His60 and His62. Residues 62–64 (HLR) and Asn94 each bind substrate. Residues Asp152, His179, and His232 each coordinate Zn(2+). Asn278 lines the substrate pocket. Zn(2+) is bound at residue Asp305. Asp305 is an active-site residue. Substrate is bound by residues His309 and 323–324 (FG).

The protein belongs to the metallo-dependent hydrolases superfamily. DHOase family. Class I DHOase subfamily. The cofactor is Zn(2+).

It catalyses the reaction (S)-dihydroorotate + H2O = N-carbamoyl-L-aspartate + H(+). Its pathway is pyrimidine metabolism; UMP biosynthesis via de novo pathway; (S)-dihydroorotate from bicarbonate: step 3/3. Its function is as follows. Catalyzes the reversible cyclization of carbamoyl aspartate to dihydroorotate. The chain is Dihydroorotase from Bacillus caldolyticus.